The chain runs to 493 residues: Glutamyl-tRNA(Gln) amidotransferase subunit A (493 aa).

Catalysis depends on charge relay system residues Lys-78 and Ser-158. Ser-182 functions as the Acyl-ester intermediate in the catalytic mechanism.

It belongs to the amidase family. GatA subfamily. Heterotrimer of A, B and C subunits.

The catalysed reaction is L-glutamyl-tRNA(Gln) + L-glutamine + ATP + H2O = L-glutaminyl-tRNA(Gln) + L-glutamate + ADP + phosphate + H(+). Its function is as follows. Allows the formation of correctly charged Gln-tRNA(Gln) through the transamidation of misacylated Glu-tRNA(Gln) in organisms which lack glutaminyl-tRNA synthetase. The reaction takes place in the presence of glutamine and ATP through an activated gamma-phospho-Glu-tRNA(Gln). In Methylocella silvestris (strain DSM 15510 / CIP 108128 / LMG 27833 / NCIMB 13906 / BL2), this protein is Glutamyl-tRNA(Gln) amidotransferase subunit A.